The chain runs to 457 residues: PE-PGRS family protein PE_PGRS18 (457 aa).

The 92-residue stretch at 1–92 (MSFVNVAPQL…SSTYAVAEAA (92 aa)) folds into the PE domain. NHL repeat units lie at residues 291–321 (FNDP…IDPV), 333–363 (NGPS…IDPN), 379–404 (GVAV…IDPA), and 419–447 (PTGV…ITGE).

Belongs to the mycobacterial PE family. PGRS subfamily.

It is found in the secreted. The protein localises to the cell wall. In terms of biological role, enhances mycobacterial intracellular survival, probably via altering host macrophage cytokine profiling and attenuating the cell apoptosis. Could be required for host endothelial-cell invasion. Expression in Mycobacterium smegmatis, a nonpathogenic species naturally deficient in PE_PGRS genes, results in alteration of the production of host cytokines, including IL-6, IL-1beta, IL-10 and IL-12p40, as well as enhanced survival within macrophages largely via attenuating the apoptosis of macrophages. The sequence is that of PE-PGRS family protein PE_PGRS18 from Mycobacterium tuberculosis (strain ATCC 25618 / H37Rv).